Here is a 67-residue protein sequence, read N- to C-terminus: Large ribosomal subunit protein uL30 (67 aa).

Belongs to the universal ribosomal protein uL30 family. Part of the 50S ribosomal subunit.

This is Large ribosomal subunit protein uL30 from Thermotoga maritima (strain ATCC 43589 / DSM 3109 / JCM 10099 / NBRC 100826 / MSB8).